A 128-amino-acid chain; its full sequence is Small ribosomal subunit protein uS13 (128 aa).

Over residues 95–118 (GLPVRGQRTHTNARTRKGPKKGLV) the composition is skewed to basic residues. The disordered stretch occupies residues 95-128 (GLPVRGQRTHTNARTRKGPKKGLVRKAAAPAPMA).

This sequence belongs to the universal ribosomal protein uS13 family. Part of the 30S ribosomal subunit. Forms a loose heterodimer with protein S19. Forms two bridges to the 50S subunit in the 70S ribosome.

Functionally, located at the top of the head of the 30S subunit, it contacts several helices of the 16S rRNA. In the 70S ribosome it contacts the 23S rRNA (bridge B1a) and protein L5 of the 50S subunit (bridge B1b), connecting the 2 subunits; these bridges are implicated in subunit movement. Contacts the tRNAs in the A and P-sites. The sequence is that of Small ribosomal subunit protein uS13 from Anaeromyxobacter dehalogenans (strain 2CP-1 / ATCC BAA-258).